The following is a 442-amino-acid chain: Capsid vertex component 1 (442 aa).

The protein belongs to the herpesviridae CVC1 protein family. As to quaternary structure, interacts (via C-terminus) with capsid vertex component 2/CVC2.

The protein localises to the virion. It localises to the host nucleus. Its function is as follows. Capsid vertex-specific component that plays a role during viral DNA encapsidation, assuring correct genome cleavage and presumably stabilizing capsids that contain full-length viral genomes. In Homo sapiens (Human), this protein is Capsid vertex component 1.